The primary structure comprises 354 residues: Histidinol-phosphate aminotransferase (354 aa).

An N6-(pyridoxal phosphate)lysine modification is found at K222.

This sequence belongs to the class-II pyridoxal-phosphate-dependent aminotransferase family. Histidinol-phosphate aminotransferase subfamily. In terms of assembly, homodimer. The cofactor is pyridoxal 5'-phosphate.

It carries out the reaction L-histidinol phosphate + 2-oxoglutarate = 3-(imidazol-4-yl)-2-oxopropyl phosphate + L-glutamate. Its pathway is amino-acid biosynthesis; L-histidine biosynthesis; L-histidine from 5-phospho-alpha-D-ribose 1-diphosphate: step 7/9. This chain is Histidinol-phosphate aminotransferase, found in Leuconostoc citreum (strain KM20).